We begin with the raw amino-acid sequence, 471 residues long: Monocarboxylate transporter 11 (471 aa).

Over residues 1-13 (MPAPQRKHRRGGF) the composition is skewed to basic residues. A disordered region spans residues 1–31 (MPAPQRKHRRGGFSHRCFPTPQTAMTPQPAG). At 1-35 (MPAPQRKHRRGGFSHRCFPTPQTAMTPQPAGPPDG) the chain is on the cytoplasmic side. Residues 19–28 (PTPQTAMTPQ) are compositionally biased toward low complexity. 12 helical membrane passes run 36-56 (GWGWVVAAAAFAINGLSYGLL), 78-98 (AWISALALAVQQAASPVGSAL), 106-126 (PVVMVGGVLASLGFVFSAFAS), 131-151 (LYLGLGLLAGFGWALVFAPAL), 163-183 (VLAVGLALTGNGASSLLLAPA), 198-218 (LLLGAITLHLTPCGALLLPLV), 243-263 (AFSIFALGTALVGGGYFVPYV), 273-293 (GLGGYGAALVVAVAAMGDAGA), 312-332 (LAVFGALTGLGLWVVGLVPVV), 333-353 (GGEESWGGPLLAAAVAYGLSA), 367-389 (LVGVGGVVQATGLVMMLMSLGGL), and 407-427 (ASFLLSGSLILSGSFIYIGLP). At 428 to 471 (RALPSCGPASPPATPPPETGELLPAPQAVLLSPGGPGSTLDTTC) the chain is on the cytoplasmic side.

It belongs to the major facilitator superfamily. Monocarboxylate porter (TC 2.A.1.13) family. Interacts with isoform 2 of BSG. In terms of tissue distribution, expressed in liver, salivary gland and thyroid.

It localises to the endoplasmic reticulum membrane. Its subcellular location is the cell membrane. The catalysed reaction is pyruvate(out) + H(+)(out) = pyruvate(in) + H(+)(in). Proton-linked monocarboxylate transporter. It catalyzes the transport of pyruvate across the plasma membrane. Probably involved in hepatic lipid metabolism: overexpression results in an increase of triacylglycerol(TAG) levels, small increases in intracellular diacylglycerols and decreases in lysophosphatidylcholine, cholesterol ester and sphingomyelin lipids. The sequence is that of Monocarboxylate transporter 11 (SLC16A11) from Homo sapiens (Human).